A 737-amino-acid polypeptide reads, in one-letter code: Catalase-peroxidase 2 (737 aa).

The disordered stretch occupies residues 1 to 33; sequence MPEATEHPPIGEAQTEPAQSGCPMVIKPPVEGG. Positions 107-235 form a cross-link, tryptophyl-tyrosyl-methioninium (Trp-Tyr) (with M-261); that stretch reads WHAAGTYRVQ…LGASHMGLIY (129 aa). The Proton acceptor role is filled by His108. A cross-link (tryptophyl-tyrosyl-methioninium (Tyr-Met) (with W-107)) is located at residues 235–261; it reads YVNPEGPEGNPDPIAAAIDIRETFGRM. Heme is bound at residue His276.

It belongs to the peroxidase family. Peroxidase/catalase subfamily. As to quaternary structure, homodimer or homotetramer. Heme b is required as a cofactor. In terms of processing, formation of the three residue Trp-Tyr-Met cross-link is important for the catalase, but not the peroxidase activity of the enzyme.

It catalyses the reaction H2O2 + AH2 = A + 2 H2O. It carries out the reaction 2 H2O2 = O2 + 2 H2O. Bifunctional enzyme with both catalase and broad-spectrum peroxidase activity. This is Catalase-peroxidase 2 from Mycolicibacterium vanbaalenii (strain DSM 7251 / JCM 13017 / BCRC 16820 / KCTC 9966 / NRRL B-24157 / PYR-1) (Mycobacterium vanbaalenii).